The following is a 94-amino-acid chain: Integration host factor subunit beta (94 aa).

This sequence belongs to the bacterial histone-like protein family. As to quaternary structure, heterodimer of an alpha and a beta chain.

This protein is one of the two subunits of integration host factor, a specific DNA-binding protein that functions in genetic recombination as well as in transcriptional and translational control. The polypeptide is Integration host factor subunit beta (Edwardsiella ictaluri (strain 93-146)).